The chain runs to 545 residues: Glucans biosynthesis protein G (545 aa).

An N-terminal signal peptide occupies residues 1–34 (MVSLLRCQSFKPSSSLICSLALSAAFALSSSAFA). The tract at residues 38–60 (KPAENKPATPVVSPPKATAQPAN) is disordered.

Belongs to the OpgD/OpgG family.

The protein resides in the periplasm. The protein operates within glycan metabolism; osmoregulated periplasmic glucan (OPG) biosynthesis. In terms of biological role, involved in the biosynthesis of osmoregulated periplasmic glucans (OPGs). This Shewanella sp. (strain ANA-3) protein is Glucans biosynthesis protein G.